The chain runs to 567 residues: Glutamine-dependent NAD(+) synthetase (567 aa).

The region spanning 2 to 242 (LNLTLAQLNF…EDILTVTLDL (241 aa)) is the CN hydrolase domain. The active-site Proton acceptor; for glutaminase activity is Glu41. The active-site For glutaminase activity is the Lys109. Tyr115 is a binding site for L-glutamine. Cys145 functions as the Nucleophile; for glutaminase activity in the catalytic mechanism. Ser172 and Lys178 together coordinate L-glutamine. Residues 287-567 (PKEEEEIYAA…RMPVTNKFFK (281 aa)) are ligase. An ATP-binding site is contributed by 316–323 (GLSGGIDS). Asn399 contacts deamido-NAD(+). Residue Thr423 participates in ATP binding. Residues Glu428 and Lys538 each contribute to the deamido-NAD(+) site.

This sequence in the C-terminal section; belongs to the NAD synthetase family.

The catalysed reaction is deamido-NAD(+) + L-glutamine + ATP + H2O = L-glutamate + AMP + diphosphate + NAD(+) + H(+). It functions in the pathway cofactor biosynthesis; NAD(+) biosynthesis; NAD(+) from deamido-NAD(+) (L-Gln route): step 1/1. Catalyzes the ATP-dependent amidation of deamido-NAD to form NAD. Uses L-glutamine as a nitrogen source. The protein is Glutamine-dependent NAD(+) synthetase of Aquifex aeolicus (strain VF5).